A 563-amino-acid chain; its full sequence is GTPase Obg (563 aa).

Positions 2–168 constitute an Obg domain; it reads SDFVDRVTVH…RDVILELKSI (167 aa). The OBG-type G domain maps to 169–349; sequence ADVALVGFPS…LNFALSALVH (181 aa). GTP-binding positions include 175 to 182, 200 to 204, 221 to 224, 301 to 304, and 330 to 332; these read GFPSAGKS, FTTLV, DVPG, NKID, and STA. Mg(2+) is bound by residues Ser182 and Thr202. The region spanning 383 to 469 is the OCT domain; the sequence is DEGGSALEFT…ARMVEFDWDP (87 aa). The disordered stretch occupies residues 529–563; that stretch reads RKAGHWADPTVDDDRHDETSLFGHGESSEDGETEE.

The protein belongs to the TRAFAC class OBG-HflX-like GTPase superfamily. OBG GTPase family. Monomer. It depends on Mg(2+) as a cofactor.

Its subcellular location is the cytoplasm. Functionally, an essential GTPase which binds GTP, GDP and possibly (p)ppGpp with moderate affinity, with high nucleotide exchange rates and a fairly low GTP hydrolysis rate. Plays a role in control of the cell cycle, stress response, ribosome biogenesis and in those bacteria that undergo differentiation, in morphogenesis control. This chain is GTPase Obg, found in Bifidobacterium longum (strain DJO10A).